The chain runs to 298 residues: UTP--glucose-1-phosphate uridylyltransferase (298 aa).

This sequence belongs to the UDPGP type 2 family.

It catalyses the reaction alpha-D-glucose 1-phosphate + UTP + H(+) = UDP-alpha-D-glucose + diphosphate. It participates in carbohydrate metabolism; nucleotide-sugar metabolism. It functions in the pathway capsule biogenesis; capsule polysaccharide biosynthesis. The polypeptide is UTP--glucose-1-phosphate uridylyltransferase (galF) (Klebsiella pneumoniae).